A 397-amino-acid polypeptide reads, in one-letter code: MTTLLNPYFGEFGGMYVPQILMPALRQLEEAFVSAQKDPAFQAEFTDLLKNYAGRPTALTKCRNLTEGTKTTLYLKREDLLHGGAHKTNQVLGQALLAKRMGKTEIIAETGAGQHGVASALACALLGLKCRIYMGAKDIERQSPNVFRMRLMGADVIPVHSGSATLKDACNEALRDWSGSYDTAHYMLGTAAGPHPFPTIVREFQRMIGEETKAQILEKEGRLPDAVIACVGGGSNAIGMFADFIDDTSVGLIGVEPAGHGIESGEHGAPLKHGRVGIYFGMKSPMMQTDEGQIEESYSISAGLDFPSVGPQHAHLNSIGRAEYVSITDDEALEAFKTLCRNEGIIPALESSHALAYALKMIKEDPEKEQLLVVNLSGRGDKDIFTVHDILKARGEI.

Lys-87 carries the N6-(pyridoxal phosphate)lysine modification.

This sequence belongs to the TrpB family. In terms of assembly, tetramer of two alpha and two beta chains. Pyridoxal 5'-phosphate is required as a cofactor.

The catalysed reaction is (1S,2R)-1-C-(indol-3-yl)glycerol 3-phosphate + L-serine = D-glyceraldehyde 3-phosphate + L-tryptophan + H2O. It participates in amino-acid biosynthesis; L-tryptophan biosynthesis; L-tryptophan from chorismate: step 5/5. The beta subunit is responsible for the synthesis of L-tryptophan from indole and L-serine. This is Tryptophan synthase beta chain from Enterobacter sp. (strain 638).